The primary structure comprises 252 residues: Phosphosulfolactate synthase (252 aa).

It belongs to the phosphosulfolactate synthase family.

It catalyses the reaction (2R)-O-phospho-3-sulfolactate = phosphoenolpyruvate + sulfite + H(+). Functionally, catalyzes the addition of sulfite to phosphoenolpyruvate (PEP) to yield (2R)-phospho-3-sulfolactate (PSL). Is probably involved in the biosynthesis of L-sulfolactate, which is a major constituent of sporulating cells and mature spores. The chain is Phosphosulfolactate synthase (yitD) from Bacillus subtilis (strain 168).